Reading from the N-terminus, the 149-residue chain is Heavy metal-associated isoprenylated plant protein 21 (149 aa).

The region spanning 25–88 (LQTVDIKVKM…RVKSTGKKAE (64 aa)) is the HMA domain. Residues C36 and C39 each coordinate a metal cation. C146 is subject to Cysteine methyl ester. Residue C146 is the site of S-farnesyl cysteine attachment. Positions 147-149 (SIM) are cleaved as a propeptide — removed in mature form.

This sequence belongs to the HIPP family. In terms of assembly, interacts with ZHD11/HB29. In terms of tissue distribution, expressed at low levels in leaves and sepals.

Its subcellular location is the membrane. Heavy-metal-binding protein. Binds cadmium. May be involved in cadmium transport and play a role in cadmium detoxification. This Arabidopsis thaliana (Mouse-ear cress) protein is Heavy metal-associated isoprenylated plant protein 21.